The following is a 398-amino-acid chain: 1-deoxy-D-xylulose 5-phosphate reductoisomerase (398 aa).

NADPH is bound by residues T10, G11, S12, I13, N38, and N124. K125 provides a ligand contact to 1-deoxy-D-xylulose 5-phosphate. Position 126 (E126) interacts with NADPH. D150 contributes to the Mn(2+) binding site. 1-deoxy-D-xylulose 5-phosphate-binding residues include S151, E152, S176, and H199. Position 152 (E152) interacts with Mn(2+). G205 contacts NADPH. 1-deoxy-D-xylulose 5-phosphate contacts are provided by S212, N217, K218, and E221. Position 221 (E221) interacts with Mn(2+).

Belongs to the DXR family. It depends on Mg(2+) as a cofactor. Mn(2+) is required as a cofactor.

It catalyses the reaction 2-C-methyl-D-erythritol 4-phosphate + NADP(+) = 1-deoxy-D-xylulose 5-phosphate + NADPH + H(+). It functions in the pathway isoprenoid biosynthesis; isopentenyl diphosphate biosynthesis via DXP pathway; isopentenyl diphosphate from 1-deoxy-D-xylulose 5-phosphate: step 1/6. In terms of biological role, catalyzes the NADPH-dependent rearrangement and reduction of 1-deoxy-D-xylulose-5-phosphate (DXP) to 2-C-methyl-D-erythritol 4-phosphate (MEP). The sequence is that of 1-deoxy-D-xylulose 5-phosphate reductoisomerase from Crocosphaera subtropica (strain ATCC 51142 / BH68) (Cyanothece sp. (strain ATCC 51142)).